A 215-amino-acid polypeptide reads, in one-letter code: N-(5'-phosphoribosyl)anthranilate isomerase (215 aa).

It belongs to the TrpF family.

The catalysed reaction is N-(5-phospho-beta-D-ribosyl)anthranilate = 1-(2-carboxyphenylamino)-1-deoxy-D-ribulose 5-phosphate. It functions in the pathway amino-acid biosynthesis; L-tryptophan biosynthesis; L-tryptophan from chorismate: step 3/5. This is N-(5'-phosphoribosyl)anthranilate isomerase from Paracoccus denitrificans (strain Pd 1222).